The chain runs to 263 residues: Hydroxyethylthiazole kinase (263 aa).

M41 contributes to the substrate binding site. The ATP site is built by R117 and S163. A substrate-binding site is contributed by G190.

It belongs to the Thz kinase family. Mg(2+) is required as a cofactor.

It catalyses the reaction 5-(2-hydroxyethyl)-4-methylthiazole + ATP = 4-methyl-5-(2-phosphooxyethyl)-thiazole + ADP + H(+). Its pathway is cofactor biosynthesis; thiamine diphosphate biosynthesis; 4-methyl-5-(2-phosphoethyl)-thiazole from 5-(2-hydroxyethyl)-4-methylthiazole: step 1/1. Its function is as follows. Catalyzes the phosphorylation of the hydroxyl group of 4-methyl-5-beta-hydroxyethylthiazole (THZ). This is Hydroxyethylthiazole kinase from Lactiplantibacillus plantarum (strain ATCC BAA-793 / NCIMB 8826 / WCFS1) (Lactobacillus plantarum).